Consider the following 178-residue polypeptide: Probable chorismate pyruvate-lyase (178 aa).

The substrate site is built by arginine 73, leucine 111, and glutamate 163.

The protein belongs to the UbiC family.

The protein resides in the cytoplasm. It catalyses the reaction chorismate = 4-hydroxybenzoate + pyruvate. Its pathway is cofactor biosynthesis; ubiquinone biosynthesis. Functionally, removes the pyruvyl group from chorismate, with concomitant aromatization of the ring, to provide 4-hydroxybenzoate (4HB) for the ubiquinone pathway. The sequence is that of Probable chorismate pyruvate-lyase from Pseudomonas aeruginosa (strain ATCC 15692 / DSM 22644 / CIP 104116 / JCM 14847 / LMG 12228 / 1C / PRS 101 / PAO1).